A 227-amino-acid chain; its full sequence is Cytochrome c oxidase subunit 2 (227 aa).

Residues 1–14 lie on the Mitochondrial intermembrane side of the membrane; it reads MAYPFQLGLQDATS. A helical membrane pass occupies residues 15–45; sequence PIMEELTNFHDHTLMIVFLISSLVLYLISLM. Topologically, residues 46–59 are mitochondrial matrix; it reads LTTKLIHTNTMDAQ. The helical transmembrane segment at 60 to 87 threads the bilayer; the sequence is EVETVWTILPAIILIMIALPSLRILYLM. Topologically, residues 88-227 are mitochondrial intermembrane; it reads DEINNPVLTV…LFENWSTSMI (140 aa). His-161, Cys-196, Glu-198, Cys-200, His-204, and Met-207 together coordinate Cu cation. Glu-198 contributes to the Mg(2+) binding site.

Belongs to the cytochrome c oxidase subunit 2 family. Component of the cytochrome c oxidase (complex IV, CIV), a multisubunit enzyme composed of 14 subunits. The complex is composed of a catalytic core of 3 subunits MT-CO1, MT-CO2 and MT-CO3, encoded in the mitochondrial DNA, and 11 supernumerary subunits COX4I, COX5A, COX5B, COX6A, COX6B, COX6C, COX7A, COX7B, COX7C, COX8 and NDUFA4, which are encoded in the nuclear genome. The complex exists as a monomer or a dimer and forms supercomplexes (SCs) in the inner mitochondrial membrane with NADH-ubiquinone oxidoreductase (complex I, CI) and ubiquinol-cytochrome c oxidoreductase (cytochrome b-c1 complex, complex III, CIII), resulting in different assemblies (supercomplex SCI(1)III(2)IV(1) and megacomplex MCI(2)III(2)IV(2)). Found in a complex with TMEM177, COA6, COX18, COX20, SCO1 and SCO2. Interacts with TMEM177 in a COX20-dependent manner. Interacts with COX20. Interacts with COX16. It depends on Cu cation as a cofactor.

The protein localises to the mitochondrion inner membrane. It catalyses the reaction 4 Fe(II)-[cytochrome c] + O2 + 8 H(+)(in) = 4 Fe(III)-[cytochrome c] + 2 H2O + 4 H(+)(out). Functionally, component of the cytochrome c oxidase, the last enzyme in the mitochondrial electron transport chain which drives oxidative phosphorylation. The respiratory chain contains 3 multisubunit complexes succinate dehydrogenase (complex II, CII), ubiquinol-cytochrome c oxidoreductase (cytochrome b-c1 complex, complex III, CIII) and cytochrome c oxidase (complex IV, CIV), that cooperate to transfer electrons derived from NADH and succinate to molecular oxygen, creating an electrochemical gradient over the inner membrane that drives transmembrane transport and the ATP synthase. Cytochrome c oxidase is the component of the respiratory chain that catalyzes the reduction of oxygen to water. Electrons originating from reduced cytochrome c in the intermembrane space (IMS) are transferred via the dinuclear copper A center (CU(A)) of subunit 2 and heme A of subunit 1 to the active site in subunit 1, a binuclear center (BNC) formed by heme A3 and copper B (CU(B)). The BNC reduces molecular oxygen to 2 water molecules using 4 electrons from cytochrome c in the IMS and 4 protons from the mitochondrial matrix. This Gerbillurus vallinus (Brush-tailed hairy-footed gerbil) protein is Cytochrome c oxidase subunit 2 (MT-CO2).